We begin with the raw amino-acid sequence, 962 residues long: Splicing regulator ARVCF (962 aa).

The stretch at 8-46 (SAASILASVKEQEARFERLTRALEQERRHVALQLERAQQ) forms a coiled coil. The tract at residues 95-122 (TVEEDPGTPTSHVSIVTSEDGTTRRTET) is disordered. A phosphothreonine mark is found at T102 and T104. Positions 102–114 (TPTSHVSIVTSED) are enriched in polar residues. Position 170 is an omega-N-methylarginine (R170). Disordered regions lie at residues 186 to 253 (GGGF…LPER) and 266 to 290 (RSLA…RRRP). The segment covering 206–217 (RGLGMRPPRAGP) has biased composition (low complexity). A Phosphoserine modification is found at S267. Over residues 270-280 (ADDEGGPELEP) the composition is skewed to acidic residues. Phosphoserine occurs at positions 332, 335, 343, and 345. 6 ARM repeats span residues 348 to 387 (SARK…HLCF), 390 to 429 (EGVK…NLSY), 433 to 467 (TDNK…VTGT), 468 to 508 (LWNL…NEDS), 526 to 565 (LRNV…DTDN), and 575 to 622 (MRNL…GKKA). The interval 590–614 (DRYQEAEPGPLGSAVGSQRRRRDDA) is disordered. S606 is modified (phosphoserine). The Nuclear localization signal signature appears at 607–623 (QRRRRDDASCFGGKKAK). T642 is subject to Phosphothreonine. 4 ARM repeats span residues 646 to 686 (PKRT…AAGA), 699 to 738 (TYIR…NLSL), 739 to 781 (DRRN…AVLN), and 782 to 826 (TIHE…SHVL). Residues 776–962 (VVAVLNTIHE…AKPQPVDSWV (187 aa)) form a required for interaction with RNA-binding proteins DDX5, HNRNPH2 and SRSF1 and with mRNAs region. The disordered stretch occupies residues 854–962 (ATAKGPKGAL…AKPQPVDSWV (109 aa)). S864 and S871 each carry phosphoserine. T872 is modified (phosphothreonine). Basic and acidic residues predominate over residues 878–887 (KSLEGEKTGS). The residue at position 915 (S915) is a Phosphoserine. Positions 920–932 (ASEKEPLKLDPSR) are enriched in basic and acidic residues.

The protein belongs to the beta-catenin family. As to quaternary structure, component of a ribonucleoprotein complex containing mRNAs and RNA-binding proteins including DDX5, HNRNPH2 and SRSF1 as well as ARVCF. Interacts (via the extreme C-terminus) with FRMPD2 (via the PDZ 2 domain). Interacts with CCDC85B. In terms of tissue distribution, found in all the examined tissues including heart, brain, liver and kidney. Found at low level in lung. Expressed in dermal connective tissue, salivary gland duct and in the corneal layer (at protein level). Expressed in arrector pili muscle (at protein level). High levels detected in epithelial cells with lower levels found in fibroblasts and T lymphocytes.

Its subcellular location is the cell junction. The protein localises to the adherens junction. The protein resides in the nucleus. It is found in the cytoplasm. Contributes to the regulation of alternative splicing of pre-mRNAs. In Homo sapiens (Human), this protein is Splicing regulator ARVCF.